A 369-amino-acid chain; its full sequence is Phosphoserine aminotransferase (369 aa).

Arg42 lines the L-glutamate pocket. Pyridoxal 5'-phosphate-binding residues include Trp101, Thr152, Asp176, and Gln199. Lys200 is subject to N6-(pyridoxal phosphate)lysine. 241-242 (NT) lines the pyridoxal 5'-phosphate pocket.

It belongs to the class-V pyridoxal-phosphate-dependent aminotransferase family. SerC subfamily. Homodimer. Pyridoxal 5'-phosphate is required as a cofactor.

The protein localises to the cytoplasm. It carries out the reaction O-phospho-L-serine + 2-oxoglutarate = 3-phosphooxypyruvate + L-glutamate. The catalysed reaction is 4-(phosphooxy)-L-threonine + 2-oxoglutarate = (R)-3-hydroxy-2-oxo-4-phosphooxybutanoate + L-glutamate. It participates in amino-acid biosynthesis; L-serine biosynthesis; L-serine from 3-phospho-D-glycerate: step 2/3. The protein operates within cofactor biosynthesis; pyridoxine 5'-phosphate biosynthesis; pyridoxine 5'-phosphate from D-erythrose 4-phosphate: step 3/5. Catalyzes the reversible conversion of 3-phosphohydroxypyruvate to phosphoserine and of 3-hydroxy-2-oxo-4-phosphonooxybutanoate to phosphohydroxythreonine. This is Phosphoserine aminotransferase from Delftia acidovorans (strain DSM 14801 / SPH-1).